The primary structure comprises 573 residues: O-fucosyltransferase 20 (573 aa).

The Cytoplasmic segment spans residues 1–60 (MALSKNSNSNSFNKKKVSYISVPSQIINSLSSSSLQSLLVSPKKSSRSTNRFSFSYRNPR). Residues 61-81 (IWFFTLFLVSLFGMLKLGFNV) traverse the membrane as a helical; Signal-anchor for type II membrane protein segment. Topologically, residues 82 to 573 (DPISLPFSRY…RQQQEQQSDA (492 aa)) are lumenal. Asn138 carries an N-linked (GlcNAc...) asparagine glycan. 344–346 (HLR) is a substrate binding site. N-linked (GlcNAc...) asparagine glycosylation is found at Asn385 and Asn517. Residues 547–556 (AGKDVTKHPV) are compositionally biased toward basic and acidic residues. The disordered stretch occupies residues 547-573 (AGKDVTKHPVPECMCSDRQQQEQQSDA). Over residues 563-573 (DRQQQEQQSDA) the composition is skewed to polar residues.

The protein belongs to the glycosyltransferase GT106 family. Interacts with RACK1A. As to expression, highly expressed in shoot apical meristem (SAM) and in young vegetative tissues.

It is found in the golgi apparatus membrane. The protein operates within glycan metabolism. In terms of biological role, may play a role in the biosynthesis of matrix polysaccharides and contribute to the biomechanics and development of the plant cell wall. This Arabidopsis thaliana (Mouse-ear cress) protein is O-fucosyltransferase 20.